The following is a 178-amino-acid chain: FXYD domain-containing ion transport regulator 5 (178 aa).

The N-terminal stretch at 1-21 is a signal peptide; that stretch reads MSLSSRLCLLTIVALILPSRG. Residues 21–59 show a composition bias toward polar residues; sequence GQTPKKPTSIFTADQTSATTRDNVPDPDQTSPGVQTTPL. The segment at 21-130 is disordered; sequence GQTPKKPTSI…SYIEHPLDSN (110 aa). The Extracellular segment spans residues 22-145; the sequence is QTPKKPTSIF…YYDDTTLRKR (124 aa). Residues 67-79 are compositionally biased toward low complexity; sequence TGSQTAAQTETQQ. The segment covering 80 to 100 has biased composition (polar residues); sequence LTKMATSNPVSDPGPHTSSKK. A helical transmembrane segment spans residues 146-166; that stretch reads GLLVAAVLFITGIIILTSGKC. Residues 167–178 are Cytoplasmic-facing; sequence RQLSQFCLNRHR.

It belongs to the FXYD family. As to quaternary structure, regulatory subunit of the sodium/potassium-transporting ATPase which is composed of a catalytic alpha subunit, a non-catalytic beta subunit and an additional regulatory subunit. The regulatory subunit, a member of the FXYD protein family, modulates the enzymatic activity in a tissue- and isoform-specific way by changing affinities of the Na+/K+-ATPase toward Na(+), K(+) or ATP. In terms of processing, glycosylated. In terms of tissue distribution, expressed mainly in epithelial tissue, such as lung, intestine and kidney. Not detected in brain, liver, muscle, and heart.

The protein localises to the cell membrane. The protein resides in the basolateral cell membrane. Functionally, associates with and regulates the activity of the sodium/potassium-transporting ATPase (NKA) which catalyzes the hydrolysis of ATP coupled with the exchange of Na(+) and K(+) ions across the plasma membrane. May increase NKA activity by increasing the apparent affinity for Na(+). Involved in down-regulation of E-cadherin which results in reduced cell adhesion. Promotes metastasis. The protein is FXYD domain-containing ion transport regulator 5 (Fxyd5) of Mus musculus (Mouse).